The primary structure comprises 521 residues: Cytochrome P450 52A9 (521 aa).

A heme-binding site is contributed by C468.

It belongs to the cytochrome P450 family. Requires heme as cofactor.

Its subcellular location is the membrane. In terms of biological role, together with an NADPH cytochrome P450 the enzyme system catalyzes the terminal hydroxylation as the first step in the assimilation of alkanes and fatty acids. The sequence is that of Cytochrome P450 52A9 (CYP52A9) from Candida maltosa (Yeast).